Reading from the N-terminus, the 233-residue chain is Small ribosomal subunit protein uS2 (233 aa).

The protein belongs to the universal ribosomal protein uS2 family.

The chain is Small ribosomal subunit protein uS2 from Bacillus cereus (strain G9842).